A 253-amino-acid polypeptide reads, in one-letter code: MPFEFIDAAHAGQAGSDPLQDELALLDLAAQGRQVAQLWEAPLSLVVPRTYLRHAALETARADFAQQGCPVFLRMSGGGLVPQGPGILNLSLAYTVEQPPGARSDAVYLHLCEVIGDALQSLGVDTHWQAVAGSFCDGRYNLAWGPPEAARKIAGTAQYWRRAPAAMQTADGQRHLVLAHAVLLVSAGPVQINARANAFEAAIDSGRHYDAGKVVSVREALLASGRAVDDDAALMAQVSDALRRSVGQTPPPA.

Residues 30–236 form the BPL/LPL catalytic domain; the sequence is AQGRQVAQLW…AVDDDAALMA (207 aa).

This is an uncharacterized protein from Cupriavidus necator (strain ATCC 17699 / DSM 428 / KCTC 22496 / NCIMB 10442 / H16 / Stanier 337) (Ralstonia eutropha).